The following is a 319-amino-acid chain: Proline hydroxylase buaE (319 aa).

The region spanning 168-280 (NSSELRLNHY…RYSIAYFGKP (113 aa)) is the Fe2OG dioxygenase domain. 3 residues coordinate Fe cation: H195, D197, and H255. R271 contributes to the 2-oxoglutarate binding site.

It belongs to the iron/ascorbate-dependent oxidoreductase family. The cofactor is Fe(2+).

It participates in mycotoxin biosynthesis. Functionally, proline hydroxylase; part of the gene cluster that mediates the biosynthesis of burnettramic acids, an unusual class of bolaamphiphilic pyrrolizidinediones that display potent antibacterial, antifungal, and cytotoxic activities. The first step of the biosynthesis of burnettramic acids is the hydroxylation of proline by the proline hydroxylase buaE to generate 4-hydroxyproline. The PKS-NRPS buaA and trans-enoyl reductase buaC construct the highly reduced polyketide chain, and the condensation (C) domain of buaA then catalyzes the amide bond formation with the activated 4-hydroxyproline. This is followed by the R domain releasing the nascent polyketide-peptide directly via a Dieckmann condensation to afford a tetramic acid fused to the hydroxyproline, generating the bicyclic pyrrolidinedione moiety. The cytochrome P450 monooxygenases buaD and buaG are likely responsible for the multiple hydroxylations on the polyketide chain and its terminus, although in the heterologous context, buaD does not appear to be required. Therefore, while buaG may be a multifunctional cytochrome P450 monooxygenase, it cannot be ruled out that the two secondary alcohols on the polyketide chain could have an acetate origin. Finally, the glycosyltransferase buaB transfers beta-D-mannose to the aglycone burnettramic acid A to form burnettramic acid A. Burnettramic acid B is a minor cis-pyrrolizidine epimer of burnettramic acid A and it is likely that small amounts of it form naturally in acidic environments. This is Proline hydroxylase buaE from Petromyces alliaceus (Aspergillus alliaceus).